A 41-amino-acid polypeptide reads, in one-letter code: Cuticle protein 32 (41 aa).

Repeat copies occupy residues 17-20, 25-28, 31-34, and 38-41.

Functionally, component of the cuticle of migratory locust which contains more than 100 different structural proteins. The protein is Cuticle protein 32 of Locusta migratoria (Migratory locust).